The sequence spans 388 residues: Lipid-A-disaccharide synthase (388 aa).

The protein belongs to the LpxB family.

The enzyme catalyses a lipid X + a UDP-2-N,3-O-bis[(3R)-3-hydroxyacyl]-alpha-D-glucosamine = a lipid A disaccharide + UDP + H(+). The protein operates within bacterial outer membrane biogenesis; LPS lipid A biosynthesis. In terms of biological role, condensation of UDP-2,3-diacylglucosamine and 2,3-diacylglucosamine-1-phosphate to form lipid A disaccharide, a precursor of lipid A, a phosphorylated glycolipid that anchors the lipopolysaccharide to the outer membrane of the cell. The chain is Lipid-A-disaccharide synthase from Burkholderia mallei (strain NCTC 10247).